A 398-amino-acid polypeptide reads, in one-letter code: Protein FAM53A (398 aa).

The tract at residues 85 to 253 (QWQPQSPRPG…TSTPALGGRR (169 aa)) is disordered. Over residues 103–115 (VDPSESTGSSTAP) the composition is skewed to polar residues. Positions 123 to 132 (SLSEPEELVR) are enriched in basic and acidic residues. Ser-125 carries the phosphoserine modification. 2 stretches are compositionally biased toward low complexity: residues 176–193 (STGP…ASGG) and 234–250 (TPLP…PALG). The short motif at 268–276 (KRSRRKRRR) is the Nuclear localization signal element. Phosphoserine is present on residues Ser-301 and Ser-304. The segment at 336 to 398 (PGCSQRGLRT…ELDLEQIENN (63 aa)) is disordered. Positions 363 to 375 (GSRRSSGDPRDGD) are enriched in basic and acidic residues.

The protein belongs to the FAM53 family.

It is found in the nucleus. Its function is as follows. May play an important role in neural development; the dorsomedial roof of the third ventricle. The sequence is that of Protein FAM53A from Homo sapiens (Human).